A 713-amino-acid chain; its full sequence is Polyribonucleotide nucleotidyltransferase (713 aa).

D485 and D491 together coordinate Mg(2+). Positions 552 to 611 (PRIYTMKIDPKKIKDVIGKGGATVRSLTEETGTSIDIDDDGTVKIAAVDKNAVQEVMSRI) constitute a KH domain. One can recognise an S1 motif domain in the interval 621-689 (GVVYKGKVTR…RQGRIRLTMK (69 aa)). Residues 694–713 (DQTKNEENLLQSEEGSPVQE) form a disordered region. The segment covering 701–713 (NLLQSEEGSPVQE) has biased composition (polar residues).

It belongs to the polyribonucleotide nucleotidyltransferase family. As to quaternary structure, component of the RNA degradosome, which is a multiprotein complex involved in RNA processing and mRNA degradation. Mg(2+) is required as a cofactor.

The protein localises to the cytoplasm. The enzyme catalyses RNA(n+1) + phosphate = RNA(n) + a ribonucleoside 5'-diphosphate. Its function is as follows. Involved in mRNA degradation. Catalyzes the phosphorolysis of single-stranded polyribonucleotides processively in the 3'- to 5'-direction. The protein is Polyribonucleotide nucleotidyltransferase of Histophilus somni (strain 2336) (Haemophilus somnus).